Reading from the N-terminus, the 535-residue chain is Calcium-dependent protein kinase 7 (535 aa).

Residues 1–29 form a disordered region; sequence MGNCCGNPSSATNQSKQGKPKNKNNPFYS. Residue glycine 2 is the site of N-myristoyl glycine attachment. Residues 59–317 form the Protein kinase domain; it reads YDLGREVGRG…AAQVLEHTWI (259 aa). Residues 65–73 and lysine 88 each bind ATP; that span reads VGRGEFGIT. Aspartate 183 (proton acceptor) is an active-site residue. Serine 223 carries the post-translational modification Phosphoserine. Positions 323 to 353 are autoinhibitory domain; it reads APNVSLGETVKARLKQFSVMNKLKKRALRVI. 4 EF-hand domains span residues 360–395, 396–431, 432–467, and 468–504; these read EEAAGIKEAFEMMDVNKRGKINLEELKYGLQKAGQQ, IADTDLQILMEATDVDGDGTLNYSEFVAVSVHLKKM, ANDEHLHKAFNFFDQNQSGYIEIDELREALNDELDN, and TSSEEVIAAIMQDVDTDKDGRISYEEFVAMMKAGTDW. Aspartate 373, asparagine 375, lysine 379, glutamate 384, aspartate 409, aspartate 411, aspartate 413, threonine 415, glutamate 420, aspartate 445, asparagine 447, serine 449, tyrosine 451, glutamate 456, aspartate 482, aspartate 484, aspartate 486, and arginine 488 together coordinate Ca(2+). Serine 490 is subject to Phosphoserine. Ca(2+) is bound at residue glutamate 493.

It belongs to the protein kinase superfamily. Ser/Thr protein kinase family. CDPK subfamily.

Its subcellular location is the cell membrane. It catalyses the reaction L-seryl-[protein] + ATP = O-phospho-L-seryl-[protein] + ADP + H(+). It carries out the reaction L-threonyl-[protein] + ATP = O-phospho-L-threonyl-[protein] + ADP + H(+). Its activity is regulated as follows. Activated by calcium. Autophosphorylation may play an important role in the regulation of the kinase activity. Its function is as follows. May play a role in signal transduction pathways that involve calcium as a second messenger. The polypeptide is Calcium-dependent protein kinase 7 (CPK7) (Arabidopsis thaliana (Mouse-ear cress)).